Reading from the N-terminus, the 125-residue chain is Linear element protein rec27 (125 aa).

Residues 45–104 (KTNIENEKKAFIKDVSQVQQKIKEFEIQKANQIKQLNEEKLSIEARKQQLEIEIRNQLLQ) adopt a coiled-coil conformation.

In terms of assembly, component of linear elements (LinEs), which are similar to synaptonemal complexes, at least composed of rec27, rec25, rec10 and mug20.

The protein localises to the cytoplasm. It localises to the nucleus. The protein resides in the chromosome. In terms of biological role, during meiotic DNA recombination, binds to and activates DNA double-strand break (DSB) hotspot sites. The sequence is that of Linear element protein rec27 from Schizosaccharomyces pombe (strain 972 / ATCC 24843) (Fission yeast).